The primary structure comprises 300 residues: Ribosomal RNA small subunit methyltransferase H (300 aa).

Residues 46–48 (GGH), D65, F92, D107, and Q114 contribute to the S-adenosyl-L-methionine site.

The protein belongs to the methyltransferase superfamily. RsmH family.

It localises to the cytoplasm. The catalysed reaction is cytidine(1402) in 16S rRNA + S-adenosyl-L-methionine = N(4)-methylcytidine(1402) in 16S rRNA + S-adenosyl-L-homocysteine + H(+). Functionally, specifically methylates the N4 position of cytidine in position 1402 (C1402) of 16S rRNA. This is Ribosomal RNA small subunit methyltransferase H from Prochlorococcus marinus subsp. pastoris (strain CCMP1986 / NIES-2087 / MED4).